The chain runs to 208 residues: Sec-independent protein translocase protein TatB (208 aa).

A helical membrane pass occupies residues 1 to 21 (MFDIGVGELTLIAVVALVVLG). A disordered region spans residues 188–208 (DAGTPAASMPSAPAKIQEKQP).

Belongs to the TatB family. The Tat system comprises two distinct complexes: a TatABC complex, containing multiple copies of TatA, TatB and TatC subunits, and a separate TatA complex, containing only TatA subunits. Substrates initially bind to the TatABC complex, which probably triggers association of the separate TatA complex to form the active translocon.

It localises to the cell inner membrane. Part of the twin-arginine translocation (Tat) system that transports large folded proteins containing a characteristic twin-arginine motif in their signal peptide across membranes. Together with TatC, TatB is part of a receptor directly interacting with Tat signal peptides. TatB may form an oligomeric binding site that transiently accommodates folded Tat precursor proteins before their translocation. This chain is Sec-independent protein translocase protein TatB, found in Xanthomonas axonopodis pv. citri (strain 306).